The primary structure comprises 275 residues: Large ribosomal subunit protein uL2 (275 aa).

Residues 218 to 275 form a disordered region; the sequence is RPQTRGSAMNPIDHPHGGGEGKTNSGRHPVSPWGMPTKGYKTRKKKASDKLIISKRKK. Residues 257–275 show a composition bias toward basic residues; the sequence is YKTRKKKASDKLIISKRKK.

Belongs to the universal ribosomal protein uL2 family. In terms of assembly, part of the 50S ribosomal subunit. Forms a bridge to the 30S subunit in the 70S ribosome.

One of the primary rRNA binding proteins. Required for association of the 30S and 50S subunits to form the 70S ribosome, for tRNA binding and peptide bond formation. It has been suggested to have peptidyltransferase activity; this is somewhat controversial. Makes several contacts with the 16S rRNA in the 70S ribosome. The chain is Large ribosomal subunit protein uL2 from Sulfurovum sp. (strain NBC37-1).